Reading from the N-terminus, the 257-residue chain is Urease accessory protein UreD (257 aa).

The protein belongs to the UreD family. In terms of assembly, ureD, UreF and UreG form a complex that acts as a GTP-hydrolysis-dependent molecular chaperone, activating the urease apoprotein by helping to assemble the nickel containing metallocenter of UreC. The UreE protein probably delivers the nickel.

The protein resides in the cytoplasm. Required for maturation of urease via the functional incorporation of the urease nickel metallocenter. In Ruegeria pomeroyi (strain ATCC 700808 / DSM 15171 / DSS-3) (Silicibacter pomeroyi), this protein is Urease accessory protein UreD.